Consider the following 465-residue polypeptide: SHC-transforming protein 1 (465 aa).

The region spanning 44 to 227 is the PID domain; that stretch reads MGPGVPYLVR…AGFDGSAWDE (184 aa). Residues 228–369 form a CH1 region; that stretch reads EEEELPDHAY…SMEDQLKREP (142 aa). Residues 281 to 315 are disordered; the sequence is VSGAEQDSRKMQPTLQGRERFPVPCSRPPNRPDLF. The region spanning 370 to 461 is the SH2 domain; that stretch reads WYQGKMSRKE…GSELCLQQPV (92 aa).

In terms of assembly, interacts with grb2. Highly expressed in oocytes and embryo. Also expressed in liver. Detected in ovary, testis and heart and to a lesser extent in liver (at protein level).

Its subcellular location is the cytoplasm. In terms of biological role, implicated in ras-dependent oocyte maturation induced by insulin/IGF1. This Xenopus laevis (African clawed frog) protein is SHC-transforming protein 1 (shc1).